The primary structure comprises 185 residues: Transcription factor FapR (185 aa).

The protein belongs to the FapR family.

Transcriptional factor involved in regulation of membrane lipid biosynthesis by repressing genes involved in fatty acid and phospholipid metabolism. The protein is Transcription factor FapR of Staphylococcus aureus (strain Mu3 / ATCC 700698).